The chain runs to 209 residues: Glycerol-3-phosphate acyltransferase (209 aa).

The next 5 membrane-spanning stretches (helical) occupy residues 8–28 (NVLF…YILA), 78–98 (VLVL…LIGI), 124–144 (VLLV…LIVA), 149–169 (ISSL…FIVH), and 170–190 (PDMP…IIFY).

This sequence belongs to the PlsY family. In terms of assembly, probably interacts with PlsX.

It is found in the cell inner membrane. The enzyme catalyses an acyl phosphate + sn-glycerol 3-phosphate = a 1-acyl-sn-glycero-3-phosphate + phosphate. It functions in the pathway lipid metabolism; phospholipid metabolism. Its function is as follows. Catalyzes the transfer of an acyl group from acyl-phosphate (acyl-PO(4)) to glycerol-3-phosphate (G3P) to form lysophosphatidic acid (LPA). This enzyme utilizes acyl-phosphate as fatty acyl donor, but not acyl-CoA or acyl-ACP. This is Glycerol-3-phosphate acyltransferase from Nitratiruptor sp. (strain SB155-2).